A 368-amino-acid polypeptide reads, in one-letter code: Large ribosomal subunit protein mL46 (368 aa).

The tract at residues 53–81 (TATATTTTTLPPPHPPVTTSTGTHAATST) is disordered. Residues 69–81 (VTTSTGTHAATST) are compositionally biased toward low complexity.

The protein belongs to the mitochondrion-specific ribosomal protein mL46 family. As to quaternary structure, component of the mitochondrial large ribosomal subunit (mt-LSU). Mature N.crassa 74S mitochondrial ribosomes consist of a small (37S) and a large (54S) subunit. The 37S small subunit contains a 16S ribosomal RNA (16S mt-rRNA) and 32 different proteins. The 54S large subunit contains a 23S rRNA (23S mt-rRNA) and 42 different proteins.

It localises to the mitochondrion. Functionally, component of the mitochondrial ribosome (mitoribosome), a dedicated translation machinery responsible for the synthesis of mitochondrial genome-encoded proteins, including at least some of the essential transmembrane subunits of the mitochondrial respiratory chain. The mitoribosomes are attached to the mitochondrial inner membrane and translation products are cotranslationally integrated into the membrane. This chain is Large ribosomal subunit protein mL46 (mrpl17), found in Neurospora crassa (strain ATCC 24698 / 74-OR23-1A / CBS 708.71 / DSM 1257 / FGSC 987).